A 124-amino-acid chain; its full sequence is Protein S100-A16 (124 aa).

The 15-residue stretch at 23-37 (VSKHSLVKNKISKSS) folds into the EF-hand 1; degenerate domain. The region spanning 54 to 89 (GNRKAADKLIQNLDANHDGRICFDEYWTMIGGITSP) is the EF-hand 2 domain. Aspartate 67, asparagine 69, aspartate 71, arginine 73, and glutamate 78 together coordinate Ca(2+). The disordered stretch occupies residues 97–124 (QECQQESQQECQQESQQESQQESQQGSS).

The protein belongs to the S-100 family. In terms of assembly, homodimer. Interacts with TP53. Ubiquitous. Widely distributed throughout the adult brain and predominantly expressed within specific astrocyte populations. Expressed at high level in adipose tissues of obese animals.

The protein localises to the nucleus. The protein resides in the nucleolus. Its subcellular location is the cytoplasm. Calcium-binding protein. Binds one calcium ion per monomer. Can promote differentiation of adipocytes (in vitro). Overexpression in 3T3-L1 preadipocytes increases their proliferation, enhances adipogenesis and reduces insulin-stimulated glucose uptake. This Mus musculus (Mouse) protein is Protein S100-A16.